The sequence spans 230 residues: Large ribosomal subunit protein uL1 (230 aa).

The protein belongs to the universal ribosomal protein uL1 family. In terms of assembly, part of the 50S ribosomal subunit.

Functionally, binds directly to 23S rRNA. The L1 stalk is quite mobile in the ribosome, and is involved in E site tRNA release. In terms of biological role, protein L1 is also a translational repressor protein, it controls the translation of the L11 operon by binding to its mRNA. This is Large ribosomal subunit protein uL1 from Granulibacter bethesdensis (strain ATCC BAA-1260 / CGDNIH1).